A 765-amino-acid polypeptide reads, in one-letter code: Amine oxidase [copper-containing] 3 (765 aa).

The Cytoplasmic segment spans residues 1-6; that stretch reads MTQKTT. Residues 7-27 form a helical; Signal-anchor for type II membrane protein membrane-spanning segment; the sequence is LVLLALAVITIFALVCVLLAG. Residues 28-765 are Extracellular-facing; it reads RSGDGGGLSQ…SHGGFAYRDN (738 aa). N-linked (GlcNAc...) asparagine glycosylation occurs at Asn-137. A disulfide bridge connects residues Cys-198 and Cys-199. 2 N-linked (GlcNAc...) asparagine glycosylation sites follow: Asn-232 and Asn-294. The active-site Proton acceptor is Asp-386. Residues Cys-404 and Cys-430 are joined by a disulfide bond. The active-site Schiff-base intermediate with substrate; via topaquinone is Tyr-471. A 2',4',5'-topaquinone modification is found at Tyr-471. His-520 and His-522 together coordinate Cu(2+). Residues Asp-529, Leu-530, Asp-531, and Glu-572 each coordinate Ca(2+). N-linked (GlcNAc...) asparagine glycosylation occurs at Asn-592. A Ca(2+)-binding site is contributed by Glu-641. The N-linked (GlcNAc...) asparagine glycan is linked to Asn-659. Residue Phe-663 coordinates Ca(2+). Asn-666 carries an N-linked (GlcNAc...) asparagine glycan. The Ca(2+) site is built by Glu-667, Asp-673, and Leu-674. His-684 is a Cu(2+) binding site. Cysteines 734 and 741 form a disulfide.

The protein belongs to the copper/topaquinone oxidase family. As to quaternary structure, homodimer; disulfide-linked. Probably forms heterodimers with AOC2. Cu(2+) serves as cofactor. It depends on Ca(2+) as a cofactor. Requires L-topaquinone as cofactor. Topaquinone (TPQ) is generated by copper-dependent autoxidation of a specific tyrosyl residue. In terms of processing, N- and O-glycosylated.

Its subcellular location is the cell membrane. It catalyses the reaction methylamine + O2 + H2O = formaldehyde + H2O2 + NH4(+). The catalysed reaction is benzylamine + O2 + H2O = benzaldehyde + H2O2 + NH4(+). It carries out the reaction 2-phenylethylamine + O2 + H2O = 2-phenylacetaldehyde + H2O2 + NH4(+). Functionally, catalyzes the oxidative deamination of primary amines to the corresponding aldehydes with the concomitant production of hydrogen peroxide and ammonia. Has a preference for the primary monoamines methylamine and benzylamine. Could also act on 2-phenylethylamine but much less efficiently. At endothelial cells surface can also function as a cell adhesion protein that participates in lymphocyte extravasation and recirculation by mediating the binding of lymphocytes to peripheral lymph node vascular endothelial cells in an L-selectin-independent fashion. This chain is Amine oxidase [copper-containing] 3, found in Mus musculus (Mouse).